The following is a 257-amino-acid chain: Large ribosomal subunit protein uL3 (257 aa).

Residues 232-257 (LKAPKKQKTKVETNQVNPKIEEEKTK) are disordered.

Belongs to the universal ribosomal protein uL3 family. In terms of assembly, part of the 50S ribosomal subunit. Forms a cluster with proteins L14 and L19.

Functionally, one of the primary rRNA binding proteins, it binds directly near the 3'-end of the 23S rRNA, where it nucleates assembly of the 50S subunit. The protein is Large ribosomal subunit protein uL3 of Mycoplasma genitalium (strain ATCC 33530 / DSM 19775 / NCTC 10195 / G37) (Mycoplasmoides genitalium).